Reading from the N-terminus, the 102-residue chain is Feather keratin (102 aa).

Position 1 is an N-acetylserine (S1).

This sequence belongs to the avian keratin family. As to quaternary structure, the avian keratins (F-ker, S-ker, C-ker and B-ker) are a complex mixture of very similar polypeptides.

This chain is Feather keratin, found in Dromaius novaehollandiae (Emu).